Here is a 733-residue protein sequence, read N- to C-terminus: Oligopeptide transporter 8 (733 aa).

Transmembrane regions (helical) follow at residues 42–62 (MWVL…FFWY), 66–86 (PLTI…HLMA), 115–135 (VLIT…HILS), 147–167 (FLPA…WAGL), 209–229 (FFVI…YLFT), 244–264 (SILV…SFGL), 281–301 (FFAS…ITPL), 357–377 (FAVT…HVLI), 413–433 (LWWF…ICIY), 442–462 (WWGA…VGVI), 531–551 (VGTL…MAEI), 596–616 (YSNI…VYLA), 644–664 (ASAV…HFVF), and 677–697 (VLSG…FLAL).

Belongs to the oligopeptide OPT transporter (TC 2.A.67.1) family.

The protein localises to the membrane. Its function is as follows. May be involved in the translocation of tetra- and pentapeptides across the cellular membrane in an energy-dependent manner. This Arabidopsis thaliana (Mouse-ear cress) protein is Oligopeptide transporter 8 (OPT8).